A 294-amino-acid chain; its full sequence is Golgi phosphoprotein 3 homolog sauron (294 aa).

Residues 1–52 (MNRSDGLVRRSVKPRENGGAEGGLNANTPDDNQDALDNLKDQEDNIDDGDSK) are disordered. A compositionally biased stretch (basic and acidic residues) spans 37–52 (DNLKDQEDNIDDGDSK). Residues Trp77, Arg86, Lys167, and Arg170 each contribute to the a 1,2-diacyl-sn-glycero-3-phospho-(1D-myo-inositol 4-phosphate) site. The beta-hairpin required for oligomerization stretch occupies residues 186–197 (EKQNFLLFDMTT).

The protein belongs to the GOLPH3/VPS74 family. Homooligomer. Interacts with botv, Ext2 and ttv. Interacts with Vti1. Interacts with Vps35, Rab5, Chc, Rab11, zip, Pav and Septin1.

The protein resides in the golgi apparatus membrane. Its subcellular location is the cytoplasmic vesicle. The protein localises to the cleavage furrow. In terms of biological role, phosphatidylinositol-4-phosphate-binding protein that links Golgi membranes to the cytoskeleton and may participate in the tensile force required for vesicle budding from the Golgi. Thereby, may play a role in Golgi membrane trafficking and could indirectly give its flattened shape to the Golgi apparatus. May also bind to the coatomer to regulate Golgi membrane trafficking. May play a role in anterograde transport from the Golgi to the plasma membrane and regulate secretion. Also involved in the control of the localization of Golgi enzymes through interaction with their cytoplasmic part. Functions in cytokinesis by regulating contractile ring formation and vesicle trafficking during cleavage furrow ingression. May also have a role in the intital steps of central spindle formation. Can also bind phosphatidylinositol-3-phosphate and phosphatidylinositol-5-phosphate in vitro. This chain is Golgi phosphoprotein 3 homolog sauron, found in Drosophila melanogaster (Fruit fly).